Reading from the N-terminus, the 420-residue chain is Diaminobutyrate--2-oxoglutarate transaminase (420 aa).

Position 271 is an N6-(pyridoxal phosphate)lysine (Lys271).

It belongs to the class-III pyridoxal-phosphate-dependent aminotransferase family. Requires pyridoxal 5'-phosphate as cofactor.

It catalyses the reaction L-2,4-diaminobutanoate + 2-oxoglutarate = L-aspartate 4-semialdehyde + L-glutamate. The protein operates within amine and polyamine biosynthesis; ectoine biosynthesis; L-ectoine from L-aspartate 4-semialdehyde: step 1/3. Functionally, catalyzes reversively the conversion of L-aspartate beta-semialdehyde (ASA) to L-2,4-diaminobutyrate (DABA) by transamination with L-glutamate. The chain is Diaminobutyrate--2-oxoglutarate transaminase (ectB) from Streptomyces anulatus (Streptomyces chrysomallus).